Reading from the N-terminus, the 264-residue chain is 3-methyl-2-oxobutanoate hydroxymethyltransferase (264 aa).

Positions 44 and 83 each coordinate Mg(2+). 3-methyl-2-oxobutanoate-binding positions include 44–45 (DS), Asp-83, and Lys-111. Glu-113 is a Mg(2+) binding site. Glu-180 functions as the Proton acceptor in the catalytic mechanism.

It belongs to the PanB family. Homodecamer; pentamer of dimers. Requires Mg(2+) as cofactor.

It localises to the cytoplasm. It catalyses the reaction 3-methyl-2-oxobutanoate + (6R)-5,10-methylene-5,6,7,8-tetrahydrofolate + H2O = 2-dehydropantoate + (6S)-5,6,7,8-tetrahydrofolate. Its pathway is cofactor biosynthesis; (R)-pantothenate biosynthesis; (R)-pantoate from 3-methyl-2-oxobutanoate: step 1/2. Functionally, catalyzes the reversible reaction in which hydroxymethyl group from 5,10-methylenetetrahydrofolate is transferred onto alpha-ketoisovalerate to form ketopantoate. The chain is 3-methyl-2-oxobutanoate hydroxymethyltransferase from Marinobacter nauticus (strain ATCC 700491 / DSM 11845 / VT8) (Marinobacter aquaeolei).